We begin with the raw amino-acid sequence, 130 residues long: MSAATDQILDQLKSLSLLEAAELVKQIEEAFGVSAAAPAGGMMMMAAPGAAAAAEPVEEQTEFDVVLESVPADKKIAVLKIVREITGLGLKEAKDLVEAAPKAVKEAIAKDAAEDAKKRIEEAGGKVTVK.

It belongs to the bacterial ribosomal protein bL12 family. Homodimer. Part of the ribosomal stalk of the 50S ribosomal subunit. Forms a multimeric L10(L12)X complex, where L10 forms an elongated spine to which 2 to 4 L12 dimers bind in a sequential fashion. Binds GTP-bound translation factors.

Functionally, forms part of the ribosomal stalk which helps the ribosome interact with GTP-bound translation factors. Is thus essential for accurate translation. The sequence is that of Large ribosomal subunit protein bL12 from Nostoc sp. (strain PCC 7120 / SAG 25.82 / UTEX 2576).